A 286-amino-acid chain; its full sequence is Pyridoxal kinase PdxY (286 aa).

Substrate contacts are provided by residues Ser9 and 44–45; that span reads TQ. Positions 111, 148, and 181 each coordinate ATP. Residue Asp222 participates in substrate binding.

This sequence belongs to the pyridoxine kinase family. PdxY subfamily. In terms of assembly, homodimer. The cofactor is Mg(2+).

The catalysed reaction is pyridoxal + ATP = pyridoxal 5'-phosphate + ADP + H(+). Its pathway is cofactor metabolism; pyridoxal 5'-phosphate salvage; pyridoxal 5'-phosphate from pyridoxal: step 1/1. In terms of biological role, pyridoxal kinase involved in the salvage pathway of pyridoxal 5'-phosphate (PLP). Catalyzes the phosphorylation of pyridoxal to PLP. The chain is Pyridoxal kinase PdxY from Histophilus somni (strain 129Pt) (Haemophilus somnus).